The chain runs to 490 residues: Ketol-acid reductoisomerase (NADP(+)) (490 aa).

A KARI N-terminal Rossmann domain is found at 18–208 (AKCRFMDSSE…GGHKAGVLMS (191 aa)). Residues 45 to 48 (CGAQ), arginine 68, arginine 76, serine 78, and 108 to 110 (DKQ) each bind NADP(+). The active site involves histidine 132. Glycine 158 lines the NADP(+) pocket. KARI C-terminal knotted domains lie at 209 to 344 (SFIA…KTPA) and 345 to 486 (GDVE…MADM). Residues aspartate 217, glutamate 221, glutamate 389, and glutamate 393 each coordinate Mg(2+). Serine 414 lines the substrate pocket.

It belongs to the ketol-acid reductoisomerase family. Requires Mg(2+) as cofactor.

It carries out the reaction (2R)-2,3-dihydroxy-3-methylbutanoate + NADP(+) = (2S)-2-acetolactate + NADPH + H(+). The enzyme catalyses (2R,3R)-2,3-dihydroxy-3-methylpentanoate + NADP(+) = (S)-2-ethyl-2-hydroxy-3-oxobutanoate + NADPH + H(+). It participates in amino-acid biosynthesis; L-isoleucine biosynthesis; L-isoleucine from 2-oxobutanoate: step 2/4. Its pathway is amino-acid biosynthesis; L-valine biosynthesis; L-valine from pyruvate: step 2/4. In terms of biological role, involved in the biosynthesis of branched-chain amino acids (BCAA). Catalyzes an alkyl-migration followed by a ketol-acid reduction of (S)-2-acetolactate (S2AL) to yield (R)-2,3-dihydroxy-isovalerate. In the isomerase reaction, S2AL is rearranged via a Mg-dependent methyl migration to produce 3-hydroxy-3-methyl-2-ketobutyrate (HMKB). In the reductase reaction, this 2-ketoacid undergoes a metal-dependent reduction by NADPH to yield (R)-2,3-dihydroxy-isovalerate. The polypeptide is Ketol-acid reductoisomerase (NADP(+)) (Marinomonas sp. (strain MWYL1)).